A 69-amino-acid polypeptide reads, in one-letter code: Conotoxin AbVIF (69 aa).

A signal peptide spans 1 to 17; the sequence is VLIIAVLFLTACQLTTA. Residues 18-40 constitute a propeptide that is removed on maturation; sequence ETSSRGKQKHRALRSTDKNSRMS. Residues 20–41 are disordered; sequence SSRGKQKHRALRSTDKNSRMSK. Disulfide bonds link Cys-43–Cys-57, Cys-50–Cys-61, and Cys-56–Cys-68.

This sequence belongs to the conotoxin O1 superfamily. As to expression, expressed by the venom duct.

The protein resides in the secreted. In Conus abbreviatus (Abbreviated cone), this protein is Conotoxin AbVIF.